Here is a 400-residue protein sequence, read N- to C-terminus: MAEKILEKLDVLDKQAEIILARRTKINRLQSEGRKTTMAIPLTFDFQLEFEEALATSASKAISKIKEDKSCSITKSKMHVSFKCEPEPRKSNFEKSNLRPFFIQTNVKNKESESTAQIEKKPRKPLDSVGLLEGDRNKRKKSPQMNDFNIKENKSVRNYQLSKYRSVRKKSLLPLCFEDELKNPHAKIVNVSPTKTVTSHMEQKDTNPIIFHDTEYVRMLLLTKNRFSSHPLENENIYPHKRTNFILERNCEILKSIIGNQSISLFKPQKTMPTVQRKDIQIPMSFKAGHTTVDDKLKKKTNKQTLENRSWNTLYNFSQNFSSLTKQFVGYLDKAVIHEMSAQTGKFERMFSAGKPTSIPTSSALPVKCYSKPFKYIYELNNVTPLDNLLNLSNEILNAS.

Over residues 112–126 (SESTAQIEKKPRKPL) the composition is skewed to basic and acidic residues. Positions 112-151 (SESTAQIEKKPRKPLDSVGLLEGDRNKRKKSPQMNDFNIK) are disordered.

This is an uncharacterized protein from Homo sapiens (Human).